The chain runs to 329 residues: Probable ABC transporter permease protein MG188 (329 aa).

A run of 6 helical transmembrane segments spans residues 30–50, 96–116, 128–148, 176–196, 234–254, and 283–303; these read FLLF…PFFL, LISL…IVFV, VFFL…VYIF, ALWA…VLII, LIFL…LALF, and NLAG…GLVL. An ABC transmembrane type-1 domain is found at 88–303; that stretch reads LRNSFLYSLI…VLGVCYGLVL (216 aa).

It belongs to the binding-protein-dependent transport system permease family. MalFG subfamily.

The protein resides in the cell membrane. Its function is as follows. Probably part of a binding-protein-dependent transport system. Probably responsible for the translocation of the substrate across the membrane. This is Probable ABC transporter permease protein MG188 from Mycoplasma genitalium (strain ATCC 33530 / DSM 19775 / NCTC 10195 / G37) (Mycoplasmoides genitalium).